Consider the following 398-residue polypeptide: MRSSDHMAFAGVLPIVFLLILSSADLAASQSQPGPTNQPYNYGRLSPAMAVIVVILIAALFFMGFFSIYFRHCSGVPDAGVSPAGGARSRATVNAAARGLDVSVVETFPTFLYSDVKTQKLGKGELECAICLNEFEDDETLRLLPKCDHVFHPHCIDAWLEAHVTCPVCRANLAEQVAEGESVEPGGTEPDLELQQVVVNPEPVVTAPVPEQLVTSEVDSRRLPGVPVDLKRVKFSRSHTTGHSVVQPGECTERFTLRLPEDVRKRIMKDWKLNRTNSLLVLPRGGSSRRGKPIDRSRARSDRWLFRKTPSFLWRSRDDGSIRLGATGSVRASAVPNSTGSDSVRAGDRWAFLRNASFLWRNSSVHVPRGGVNKDGEGTSVKSTGASGSTSGSVRLPV.

A signal peptide spans 1–29; it reads MRSSDHMAFAGVLPIVFLLILSSADLAAS. The chain crosses the membrane as a helical span at residues 50-70; it reads AVIVVILIAALFFMGFFSIYF. An RING-type; atypical zinc finger spans residues 128–170; the sequence is CAICLNEFEDDETLRLLPKCDHVFHPHCIDAWLEAHVTCPVCR. Ser-278 carries the phosphoserine modification. The interval 368-398 is disordered; the sequence is PRGGVNKDGEGTSVKSTGASGSTSGSVRLPV. Residues 378–398 are compositionally biased toward low complexity; sequence GTSVKSTGASGSTSGSVRLPV.

This sequence belongs to the RING-type zinc finger family. ATL subfamily.

It is found in the membrane. It carries out the reaction S-ubiquitinyl-[E2 ubiquitin-conjugating enzyme]-L-cysteine + [acceptor protein]-L-lysine = [E2 ubiquitin-conjugating enzyme]-L-cysteine + N(6)-ubiquitinyl-[acceptor protein]-L-lysine.. Its pathway is protein modification; protein ubiquitination. In terms of biological role, E3 ubiquitin-protein ligase able to catalyze polyubiquitination with ubiquitin-conjugating enzyme E2 UBC8 in vitro. May be involved in the plant C/N response and the early steps of the plant defense signaling pathway. This chain is E3 ubiquitin-protein ligase ATL6 (ATL6), found in Arabidopsis thaliana (Mouse-ear cress).